We begin with the raw amino-acid sequence, 175 residues long: ATP-dependent protease subunit HslV (175 aa).

Thr-2 is an active-site residue. Positions 159, 162, and 165 each coordinate Na(+).

The protein belongs to the peptidase T1B family. HslV subfamily. In terms of assembly, a double ring-shaped homohexamer of HslV is capped on each side by a ring-shaped HslU homohexamer. The assembly of the HslU/HslV complex is dependent on binding of ATP.

Its subcellular location is the cytoplasm. The catalysed reaction is ATP-dependent cleavage of peptide bonds with broad specificity.. Allosterically activated by HslU binding. Protease subunit of a proteasome-like degradation complex believed to be a general protein degrading machinery. The polypeptide is ATP-dependent protease subunit HslV (Ligilactobacillus salivarius (strain UCC118) (Lactobacillus salivarius)).